A 256-amino-acid polypeptide reads, in one-letter code: NAD-dependent protein deacetylase (256 aa).

The Deacetylase sirtuin-type domain occupies 1 to 254; the sequence is MDISYHEKIS…KDILDVIKSE (254 aa). Residues A28, T32, F39, R40, Q105, I107, D108, and H123 each contribute to the NAD(+) site. F39 is a binding site for nicotinamide. Positions 107 and 108 each coordinate nicotinamide. H123 serves as the catalytic Proton acceptor. Positions 131, 134, 156, and 159 each coordinate Zn(2+). T197, S198, and N222 together coordinate NAD(+).

This sequence belongs to the sirtuin family. Class U subfamily. Requires Zn(2+) as cofactor.

It is found in the cytoplasm. It carries out the reaction N(6)-acetyl-L-lysyl-[protein] + NAD(+) + H2O = 2''-O-acetyl-ADP-D-ribose + nicotinamide + L-lysyl-[protein]. Its function is as follows. NAD-dependent protein deacetylase which modulates the activities of several enzymes which are inactive in their acetylated form. The polypeptide is NAD-dependent protein deacetylase (Thermodesulfovibrio yellowstonii (strain ATCC 51303 / DSM 11347 / YP87)).